Reading from the N-terminus, the 364-residue chain is MNTTSTHFVPPRRFEVYEPLNQIGMWEESFKNNGDMYTPGSIIIPTNEKPDSLSEDTSHGTEGTPHKFDQEASTSRHPDKIQRRLAQNREAARKSRLRKKAYVQQLETSRLKLIHLEQELDRARQQGFYVGNGVDTNALSFSDNMSSGIVAFEMEYGHWVEEQNRQICELRTVLHGQVSDIELRSLVENAMKHYFQLFRMKSAAAKIDVFYVMSGMWKTSAERFFLWIGGFRPSELLKVLLPHFDPLTDQQLLDVCNLRQSCQQAEDALSQGMEKLQHTLAESVAAGKLGEGSYIPQMTCAMERLEALVSFVNQADHLRHETLQQMHRILTTRQAARGLLALGEYFQRLRALSSSWAARQREPT.

Residues 39–79 are disordered; that stretch reads PGSIIIPTNEKPDSLSEDTSHGTEGTPHKFDQEASTSRHPD. Basic and acidic residues predominate over residues 48–79; that stretch reads EKPDSLSEDTSHGTEGTPHKFDQEASTSRHPD. The bZIP domain maps to 78-141; the sequence is PDKIQRRLAQ…NGVDTNALSF (64 aa). Coiled coils occupy residues 79–127 and 257–277; these read DKIQ…RQQG and NLRQ…EKLQ. The interval 80-100 is basic motif; that stretch reads KIQRRLAQNREAARKSRLRKK. A leucine-zipper region spans residues 106–120; that stretch reads LETSRLKLIHLEQEL. Positions 149 to 359 constitute a DOG1 domain; that stretch reads IVAFEMEYGH…RALSSSWAAR (211 aa). The cysteines at positions 256 and 262 are disulfide-linked.

Belongs to the bZIP family. In terms of assembly, binds DNA as a dimer. Interaction with the Dof domain proteins OBP1, OBP2 or OBP3 enhances the binding to the ocs element. Interacts with RAP2-3/EPB, an ethylene-responsive element binding protein. The reduced form interacts with NPR1. As to expression, predominantly expressed in roots.

Its subcellular location is the nucleus. Functionally, transcriptional activator that binds specifically to the DNA sequence 5'-TGACG-3'. Recognizes ocs elements like the as-1 motif of the cauliflower mosaic virus 35S promoter. Binding to the as-1-like cis elements mediate auxin- and salicylic acid-inducible transcription. May be involved in the induction of the systemic acquired resistance (SAR) via its interaction with NPR1. Could also bind to the Hex-motif (5'-TGACGTGG-3') another cis-acting element found in plant histone promoters. This chain is Transcription factor TGA4 (TGA4), found in Arabidopsis thaliana (Mouse-ear cress).